Reading from the N-terminus, the 273-residue chain is Light-independent protochlorophyllide reductase iron-sulfur ATP-binding protein (273 aa).

Residues 12 to 17 (GIGKST) and Lys41 contribute to the ATP site. Position 16 (Ser16) interacts with Mg(2+). [4Fe-4S] cluster is bound by residues Cys97 and Cys131. 182 to 183 (NR) contributes to the ATP binding site.

Belongs to the NifH/BchL/ChlL family. As to quaternary structure, homodimer. Protochlorophyllide reductase is composed of three subunits; BchL, BchN and BchB. The cofactor is [4Fe-4S] cluster.

It carries out the reaction chlorophyllide a + oxidized 2[4Fe-4S]-[ferredoxin] + 2 ADP + 2 phosphate = protochlorophyllide a + reduced 2[4Fe-4S]-[ferredoxin] + 2 ATP + 2 H2O. The protein operates within porphyrin-containing compound metabolism; bacteriochlorophyll biosynthesis (light-independent). Component of the dark-operative protochlorophyllide reductase (DPOR) that uses Mg-ATP and reduced ferredoxin to reduce ring D of protochlorophyllide (Pchlide) to form chlorophyllide a (Chlide). This reaction is light-independent. The L component serves as a unique electron donor to the NB-component of the complex, and binds Mg-ATP. The protein is Light-independent protochlorophyllide reductase iron-sulfur ATP-binding protein of Chloroflexus aurantiacus (strain ATCC 29364 / DSM 637 / Y-400-fl).